The following is a 272-amino-acid chain: MSNIAESARIHPMAVVEDGATIGEGVKIGPFCHVGPHVVLHANVELLAHAVVTGRTVVGKGTRIFPMAVVGGDPQSVHHGGEDTTLTVGANCTIREGVTMNTGTADFGGRTIVGDNNLFLANSHVAHDCRVGNHVIMSNNVMLAGHVVIEDRVILGGGSAVHQFTRVGRHAFVGGLSAVSYDVIPYGMLNGNPGLLGGLNVVGMTRAGIDRAVIHRVRRAYKAIFEGTGSVRENAAAIRDEYADCEQVVQILDFIAADSDRALSSPTRGQKG.

It belongs to the transferase hexapeptide repeat family. LpxA subfamily. Homotrimer.

The protein localises to the cytoplasm. The catalysed reaction is a (3R)-hydroxyacyl-[ACP] + UDP-N-acetyl-alpha-D-glucosamine = a UDP-3-O-[(3R)-3-hydroxyacyl]-N-acetyl-alpha-D-glucosamine + holo-[ACP]. It functions in the pathway glycolipid biosynthesis; lipid IV(A) biosynthesis; lipid IV(A) from (3R)-3-hydroxytetradecanoyl-[acyl-carrier-protein] and UDP-N-acetyl-alpha-D-glucosamine: step 1/6. Involved in the biosynthesis of lipid A, a phosphorylated glycolipid that anchors the lipopolysaccharide to the outer membrane of the cell. This is Acyl-[acyl-carrier-protein]--UDP-N-acetylglucosamine O-acyltransferase from Rhizobium etli (strain ATCC 51251 / DSM 11541 / JCM 21823 / NBRC 15573 / CFN 42).